The chain runs to 290 residues: Prepilin leader peptidase/N-methyltransferase (290 aa).

A helical membrane pass occupies residues 13–33 (AFVLCTILLGLLVGSFLNVVV). Positions 72, 75, 97, and 100 each coordinate Zn(2+). 5 helical membrane passes run 128–148 (FTWQAGAMLLLTWGLLAMSLI), 158–178 (VLVLPLLWLGLIANHFGLFAS), 183–203 (LFGAVFGYLSLWSVFWLFKLV), 228–248 (ILPLTILLSSLVGAILGVIML), and 261–276 (FGPYLAIAGWIALLWG).

It belongs to the peptidase A24 family. Zn(2+) is required as a cofactor.

It localises to the cell inner membrane. It carries out the reaction Typically cleaves a -Gly-|-Phe- bond to release an N-terminal, basic peptide of 5-8 residues from type IV prepilin, and then N-methylates the new N-terminal amino group, the methyl donor being S-adenosyl-L-methionine.. In terms of biological role, plays an essential role in type IV pili and type II pseudopili formation by proteolytically removing the leader sequence from substrate proteins and subsequently monomethylating the alpha-amino group of the newly exposed N-terminal phenylalanine. Substrates include proteins required for pilus biogenesis PilE, PilV, PilW, and PilX as well as some components of the type II general secretory apparatus GspG, GspH, GspI and GspJ. The chain is Prepilin leader peptidase/N-methyltransferase (pilD) from Pseudomonas aeruginosa (strain ATCC 15692 / DSM 22644 / CIP 104116 / JCM 14847 / LMG 12228 / 1C / PRS 101 / PAO1).